A 215-amino-acid polypeptide reads, in one-letter code: UPF0502 protein YceH (215 aa).

Lys80 is modified (N6-acetyllysine).

The protein belongs to the UPF0502 family.

This Shigella boydii serotype 18 (strain CDC 3083-94 / BS512) protein is UPF0502 protein YceH.